Consider the following 847-residue polypeptide: B-cell receptor CD22 (847 aa).

The first 19 residues, M1 to S19, serve as a signal peptide directing secretion. In terms of domain architecture, Ig-like V-type spans D20–E138. Residues D20–R687 are Extracellular-facing. N-linked (GlcNAc...) asparagine glycans are attached at residues N67, N101, and N112. R120 lines the N-acetylneuraminate pocket. Residues N135, N164, and N231 are each glycosylated (N-linked (GlcNAc...) asparagine). 6 Ig-like C2-type domains span residues P143–Q235, P242–Q326, P331–Q416, P419–N500, P505–S582, and P593–T676. C161 and C219 are disulfide-bonded. Disulfide bonds link C265/C309 and C353/C396. N-linked (GlcNAc...) asparagine glycans are attached at residues N363, N428, N445, N448, and N479. 2 disulfide bridges follow: C442/C484 and C529/C571. 2 N-linked (GlcNAc...) asparagine glycosylation sites follow: N574 and N634. C616 and C659 form a disulfide bridge. The helical transmembrane segment at V688–L708 threads the bilayer. The Cytoplasmic segment spans residues Q709 to H847. Phosphoserine occurs at positions 725, 726, and 729. 2 short sequence motifs (ITIM motif) span residues I760–L765 and V794–L799. Position 762 is a phosphotyrosine (Y762). Phosphotyrosine occurs at positions 807, 822, and 842. 2 short sequence motifs (ITIM motif) span residues I820–L825 and V840–L845.

The protein belongs to the immunoglobulin superfamily. SIGLEC (sialic acid binding Ig-like lectin) family. In terms of assembly, predominantly monomer of isoform CD22-beta. Also found as heterodimer of isoform CD22-beta and a shorter isoform. Interacts with PTPN6/SHP-1, LYN, SYK, PIK3R1/PIK3R2 and PLCG1 upon phosphorylation. Interacts with GRB2, INPP5D and SHC1 upon phosphorylation. May form a complex with INPP5D/SHIP, GRB2 and SHC1. Post-translationally, phosphorylation of Tyr-762, Tyr-807 and Tyr-822 are involved in binding to SYK, GRB2 and SYK, respectively. Phosphorylation of Tyr-842 is involved in binding to SYK, PLCG2 and PIK3R1/PIK3R2. In terms of processing, phosphorylated on tyrosine residues by LYN.

It localises to the cell membrane. In terms of biological role, most highly expressed siglec (sialic acid-binding immunoglobulin-like lectin) on B-cells that plays a role in various aspects of B-cell biology including differentiation, antigen presentation, and trafficking to bone marrow. Binds to alpha 2,6-linked sialic acid residues of surface molecules such as CD22 itself, CD45 and IgM in a cis configuration. Can also bind to ligands on other cells as an adhesion molecule in a trans configuration. Acts as an inhibitory coreceptor on the surface of B-cells and inhibits B-cell receptor induced signaling, characterized by inhibition of the calcium mobilization and cellular activation. Mechanistically, the immunoreceptor tyrosine-based inhibitory motif domain is phosphorylated by the Src kinase LYN, which in turn leads to the recruitment of the protein tyrosine phosphatase 1/PTPN6, leading to the negative regulation of BCR signaling. If this negative signaling from is of sufficient strength, apoptosis of the B-cell can be induced. This is B-cell receptor CD22 from Pan troglodytes (Chimpanzee).